A 386-amino-acid polypeptide reads, in one-letter code: ATP synthase subunit a (386 aa).

4 helical membrane passes run 150 to 170 (FTNE…LFFV), 243 to 263 (HFLI…IVGF), 270 to 290 (FFSF…LVLL), and 310 to 330 (MMAG…MLFL).

The protein belongs to the ATPase A chain family. In terms of assembly, F-type ATPases have 2 components, CF(1) - the catalytic core - and CF(0) - the membrane proton channel. CF(1) has five subunits: alpha(3), beta(3), gamma(1), delta(1), epsilon(1). CF(0) has three main subunits: a, b and c.

It is found in the mitochondrion inner membrane. Functionally, mitochondrial membrane ATP synthase (F(1)F(0) ATP synthase or Complex V) produces ATP from ADP in the presence of a proton gradient across the membrane which is generated by electron transport complexes of the respiratory chain. F-type ATPases consist of two structural domains, F(1) - containing the extramembraneous catalytic core and F(0) - containing the membrane proton channel, linked together by a central stalk and a peripheral stalk. During catalysis, ATP synthesis in the catalytic domain of F(1) is coupled via a rotary mechanism of the central stalk subunits to proton translocation. Key component of the proton channel; it may play a direct role in the translocation of protons across the membrane. This chain is ATP synthase subunit a (ATP6), found in Triticum aestivum (Wheat).